We begin with the raw amino-acid sequence, 787 residues long: Protein translocase subunit SecA 2 (787 aa).

ATP-binding positions include Gln86, 104–108, and Asp493; that span reads GEGKT.

It belongs to the SecA family. Monomer and homodimer. Part of the essential Sec protein translocation apparatus which comprises SecA, SecYEG and auxiliary proteins SecDF. Other proteins may also be involved.

The protein localises to the cell membrane. It is found in the cytoplasm. The catalysed reaction is ATP + H2O + cellular proteinSide 1 = ADP + phosphate + cellular proteinSide 2.. Its function is as follows. Part of the Sec protein translocase complex. Interacts with the SecYEG preprotein conducting channel. Has a central role in coupling the hydrolysis of ATP to the transfer of proteins into and across the cell membrane, serving as an ATP-driven molecular motor driving the stepwise translocation of polypeptide chains across the membrane. The sequence is that of Protein translocase subunit SecA 2 from Bacillus thuringiensis subsp. konkukian (strain 97-27).